The following is a 185-amino-acid chain: Monooxygenase hypC (185 aa).

Helical transmembrane passes span 35 to 55 (TGTF…PVIL), 75 to 95 (GHIQ…YAAY), and 106 to 126 (PFAV…VFMA). N-linked (GlcNAc...) asparagine glycosylation is present at Asn-129. The helical transmembrane segment at 165-185 (ALFPLSGAVLGLLSTCKIVSF) threads the bilayer.

It belongs to the anthrone oxygenase family.

The protein localises to the membrane. Its pathway is mycotoxin biosynthesis. Its function is as follows. Monooxygenase; part of the fragmented gene cluster that mediates the biosynthesis of dothistromin (DOTH), a polyketide toxin very similar in structure to the aflatoxin precursor, versicolorin B. The first step of the pathway is the conversion of acetate to norsolorinic acid (NOR) and requires the fatty acid synthase subunits hexA and hexB, as well as the polyketide synthase pksA. PksA combines a hexanoyl starter unit and 7 malonyl-CoA extender units to synthesize the precursor NOR. The hexanoyl starter unit is provided to the acyl-carrier protein (ACP) domain by the fungal fatty acid synthase hexA/hexB. The second step is the conversion of NOR to averantin (AVN) and requires the norsolorinic acid ketoreductase nor1, which catalyzes the dehydration of norsolorinic acid to form (1'S)-averantin. The cytochrome P450 monooxygenase avnA then catalyzes the hydroxylation of AVN to 5'hydroxyaverantin (HAVN). The next step is performed by adhA that transforms HAVN to averufin (AVF). Averufin might then be converted to hydroxyversicolorone by cypX and avfA. Hydroxyversicolorone is further converted versiconal hemiacetal acetate (VHA) by moxY. VHA is then the substrate for the versiconal hemiacetal acetate esterase est1 to yield versiconal (VAL). Versicolorin B synthase vbsA then converts VAL to versicolorin B (VERB) by closing the bisfuran ring. Then, the activity of the versicolorin B desaturase verB leads to versicolorin A (VERA). DotB, a predicted chloroperoxidase, may perform epoxidation of the A-ring of VERA. Alternatively, a cytochrome P450, such as cypX or avnA could catalyze this step. It is also possible that another, uncharacterized, cytochrome P450 enzyme is responsible for this step. Opening of the epoxide could potentially be achieved by the epoxide hydrolase epoA. However, epoA seems not to be required for DOTH biosynthesis, but other epoxide hydrolases may have the ability to complement this hydrolysis. Alternatively, opening of the epoxide ring could be achieved non-enzymatically. The next step is the deoxygenation of ring A to yield the 5,8-dihydroxyanthraquinone which is most likely catalyzed by the NADPH dehydrogenase encoded by ver1. The last stages of DOTH biosynthesis are proposed to involve hydroxylation of the bisfuran. OrdB and norB might have oxidative roles here. An alternative possibility is that cytochrome P450 monoogenases such as avnA and cypX might perform these steps in addition to previously proposed steps. The sequence is that of Monooxygenase hypC from Dothistroma septosporum (strain NZE10 / CBS 128990) (Red band needle blight fungus).